Reading from the N-terminus, the 208-residue chain is Probable nicotinate-nucleotide adenylyltransferase (208 aa).

Belongs to the NadD family.

The enzyme catalyses nicotinate beta-D-ribonucleotide + ATP + H(+) = deamido-NAD(+) + diphosphate. Its pathway is cofactor biosynthesis; NAD(+) biosynthesis; deamido-NAD(+) from nicotinate D-ribonucleotide: step 1/1. Catalyzes the reversible adenylation of nicotinate mononucleotide (NaMN) to nicotinic acid adenine dinucleotide (NaAD). This Nostoc sp. (strain PCC 7120 / SAG 25.82 / UTEX 2576) protein is Probable nicotinate-nucleotide adenylyltransferase.